The sequence spans 422 residues: UDP-N-acetylglucosamine 1-carboxyvinyltransferase 2 (422 aa).

Residue 22–23 (KN) participates in phosphoenolpyruvate binding. Arg-93 provides a ligand contact to UDP-N-acetyl-alpha-D-glucosamine. Cys-117 (proton donor) is an active-site residue. Cys-117 is modified (2-(S-cysteinyl)pyruvic acid O-phosphothioketal). Residues 122–126 (RPVDL), Asp-308, and Ile-330 each bind UDP-N-acetyl-alpha-D-glucosamine.

This sequence belongs to the EPSP synthase family. MurA subfamily.

The protein resides in the cytoplasm. The catalysed reaction is phosphoenolpyruvate + UDP-N-acetyl-alpha-D-glucosamine = UDP-N-acetyl-3-O-(1-carboxyvinyl)-alpha-D-glucosamine + phosphate. It functions in the pathway cell wall biogenesis; peptidoglycan biosynthesis. In terms of biological role, cell wall formation. Adds enolpyruvyl to UDP-N-acetylglucosamine. The polypeptide is UDP-N-acetylglucosamine 1-carboxyvinyltransferase 2 (Legionella pneumophila (strain Lens)).